Consider the following 149-residue polypeptide: NADH-quinone oxidoreductase subunit A (149 aa).

A run of 3 helical transmembrane segments spans residues 16 to 36 (FAVF…GAFF), 68 to 88 (FYLV…LYAW), and 98 to 118 (LGFI…FYLV).

This sequence belongs to the complex I subunit 3 family. NDH-1 is composed of 13 different subunits. Subunits NuoA, H, J, K, L, M, N constitute the membrane sector of the complex.

It is found in the cell inner membrane. It carries out the reaction a quinone + NADH + 5 H(+)(in) = a quinol + NAD(+) + 4 H(+)(out). Its function is as follows. NDH-1 shuttles electrons from NADH, via FMN and iron-sulfur (Fe-S) centers, to quinones in the respiratory chain. The immediate electron acceptor for the enzyme in this species is believed to be ubiquinone. Couples the redox reaction to proton translocation (for every two electrons transferred, four hydrogen ions are translocated across the cytoplasmic membrane), and thus conserves the redox energy in a proton gradient. The sequence is that of NADH-quinone oxidoreductase subunit A from Photorhabdus laumondii subsp. laumondii (strain DSM 15139 / CIP 105565 / TT01) (Photorhabdus luminescens subsp. laumondii).